A 516-amino-acid polypeptide reads, in one-letter code: Melianol synthase CYP71BQ17 (516 aa).

The chain crosses the membrane as a helical span at residues 14 to 34 (MPHLPSLPVSLSFLLFFLMLV). Position 454 (C454) interacts with heme.

This sequence belongs to the cytochrome P450 family. Requires heme as cofactor. In terms of tissue distribution, mainly expressed in roots and, to a lesser extent, in stems and old leaves.

It localises to the membrane. It catalyses the reaction dihydroniloticin + 2 reduced [NADPH--hemoprotein reductase] + 2 O2 = melianol + 2 oxidized [NADPH--hemoprotein reductase] + 3 H2O + 2 H(+). It participates in secondary metabolite biosynthesis; terpenoid biosynthesis. Monooxygenase involved in the biosynthesis of quassinoids triterpene natural products such as ailanthone, chaparrinone, glaucarubinone and amarolide, allelopathic degraded triterpene lactones inhibiting the growth of other plants, and possessing antimalarial, antifeedant, insecticidal, anti-inflammatory and anticancer activities. Catalyzes the conversion of dihydroniloticin to the protolimonoid melianol. The protein is Melianol synthase CYP71BQ17 of Ailanthus altissima (Tree-of-heaven).